We begin with the raw amino-acid sequence, 100 residues long: Urease subunit gamma (100 aa).

Belongs to the urease gamma subunit family. Heterotrimer of UreA (gamma), UreB (beta) and UreC (alpha) subunits. Three heterotrimers associate to form the active enzyme.

It is found in the cytoplasm. The catalysed reaction is urea + 2 H2O + H(+) = hydrogencarbonate + 2 NH4(+). The protein operates within nitrogen metabolism; urea degradation; CO(2) and NH(3) from urea (urease route): step 1/1. This Nitrosospira multiformis (strain ATCC 25196 / NCIMB 11849 / C 71) protein is Urease subunit gamma.